The chain runs to 211 residues: Calaxin (211 aa).

3 EF-hand domains span residues 64–99, 100–135, and 145–180; these read TDDM…FLRG, SLEE…SLLK, and GIKD…ETLL. The Ca(2+) site is built by Asp-77, Asp-79, Asp-81, Cys-83, Glu-88, Asp-113, Asn-115, Asp-117, Glu-124, Asp-158, Asp-160, Asp-162, Lys-164, and Asp-169.

As to quaternary structure, component of the outer dynein arm-docking complex along with ODAD1, ODAD2, ODAD3 and ODAD4. Strong expression in the respiratory epithelium. Expressed in the sperm.

The protein localises to the cytoplasm. Its subcellular location is the cytoskeleton. The protein resides in the cilium axoneme. It is found in the cell projection. It localises to the cilium. The protein localises to the flagellum. Component of the outer dynein arm-docking complex (ODA-DC) that mediates outer dynein arms (ODA) binding onto the doublet microtubule. Seems to regulate the assembly of both ODAs and their axonemal docking complex onto ciliary microtubules. Regulates ciliary and flagellar motility and is required for cilia-driven determination of body laterality. In Homo sapiens (Human), this protein is Calaxin.